Reading from the N-terminus, the 919-residue chain is Sarcosine dehydrogenase, mitochondrial (919 aa).

Residues 1-22 (MASLSRVLRVAATCPRGRAAWN) constitute a mitochondrion transit peptide. Lys-38 carries the post-translational modification N6-succinyllysine. His-109 is modified (tele-8alpha-FAD histidine). An N6-acetyllysine; alternate modification is found at Lys-174. Residue Lys-174 is modified to N6-succinyllysine; alternate. N6-succinyllysine occurs at positions 278, 378, 392, and 535. N6-acetyllysine is present on residues Lys-560 and Lys-776. The residue at position 778 (Tyr-778) is a Phosphotyrosine. N6-acetyllysine; alternate is present on residues Lys-803, Lys-885, and Lys-905. N6-succinyllysine; alternate is present on residues Lys-803, Lys-885, and Lys-905.

It belongs to the GcvT family. It depends on FAD as a cofactor.

Its subcellular location is the mitochondrion matrix. It carries out the reaction (6S)-5,6,7,8-tetrahydrofolyl-(gamma-L-Glu)(n) + sarcosine + oxidized [electron-transfer flavoprotein] + H(+) = (6R)-5,10-methylenetetrahydrofolyl-(gamma-L-Glu)(n) + reduced [electron-transfer flavoprotein] + glycine. Its pathway is amine and polyamine degradation; sarcosine degradation; formaldehyde and glycine from sarcosine: step 1/1. In terms of biological role, catalyzes the last step of the oxidative degradation of choline to glycine. Converts sarcosine into glycine. The polypeptide is Sarcosine dehydrogenase, mitochondrial (Mus musculus (Mouse)).